The chain runs to 250 residues: 2,3-bisphosphoglycerate-dependent phosphoglycerate mutase (250 aa).

Residues 10 to 17, 23 to 24, Arg62, 89 to 92, Lys100, 116 to 117, and 185 to 186 contribute to the substrate site; these read RHGESQWN, TG, ERHY, RR, and GN. The Tele-phosphohistidine intermediate role is filled by His11. Glu89 serves as the catalytic Proton donor/acceptor.

This sequence belongs to the phosphoglycerate mutase family. BPG-dependent PGAM subfamily. In terms of assembly, homodimer.

It catalyses the reaction (2R)-2-phosphoglycerate = (2R)-3-phosphoglycerate. It participates in carbohydrate degradation; glycolysis; pyruvate from D-glyceraldehyde 3-phosphate: step 3/5. Functionally, catalyzes the interconversion of 2-phosphoglycerate and 3-phosphoglycerate. This chain is 2,3-bisphosphoglycerate-dependent phosphoglycerate mutase, found in Salmonella agona (strain SL483).